We begin with the raw amino-acid sequence, 874 residues long: Alanine--tRNA ligase (874 aa).

Residues His564, His568, Cys665, and His669 each coordinate Zn(2+).

Belongs to the class-II aminoacyl-tRNA synthetase family. Requires Zn(2+) as cofactor.

The protein localises to the cytoplasm. It catalyses the reaction tRNA(Ala) + L-alanine + ATP = L-alanyl-tRNA(Ala) + AMP + diphosphate. In terms of biological role, catalyzes the attachment of alanine to tRNA(Ala) in a two-step reaction: alanine is first activated by ATP to form Ala-AMP and then transferred to the acceptor end of tRNA(Ala). Also edits incorrectly charged Ser-tRNA(Ala) and Gly-tRNA(Ala) via its editing domain. In Burkholderia orbicola (strain MC0-3), this protein is Alanine--tRNA ligase.